Here is a 257-residue protein sequence, read N- to C-terminus: Chymotrypsin-like elastase family member 3B (257 aa).

A signal peptide (or 3) is located at residues 1 to 2 (VA). Positions 3 to 15 (SGYGPPSSHPSSR) are cleaved as a propeptide — activation peptide. One can recognise a Peptidase S1 domain in the interval 16-255 (VVNGEDAVPY…FIDWIEETIA (240 aa)). Residue Asn-38 is glycosylated (N-linked (GlcNAc...) asparagine). Intrachain disulfides connect Cys-45/Cys-61 and Cys-104/Cys-107. His-60 (charge relay system) is an active-site residue. Asp-110 functions as the Charge relay system in the catalytic mechanism. 3 disulfides stabilise this stretch: Cys-144–Cys-210, Cys-175–Cys-191, and Cys-200–Cys-231. Catalysis depends on Ser-204, which acts as the Charge relay system.

Belongs to the peptidase S1 family. Elastase subfamily.

It catalyses the reaction Preferential cleavage: Ala-|-Xaa. Does not hydrolyze elastin.. Its function is as follows. Efficient protease with alanine specificity but only little elastolytic activity. The polypeptide is Chymotrypsin-like elastase family member 3B (CELA3B) (Macaca mulatta (Rhesus macaque)).